Consider the following 85-residue polypeptide: Antifungal protein (85 aa).

A signal peptide spans 1–18; that stretch reads MVKLFVIVILALIAVAFG. Tandem repeats lie at residues 19 to 25 and 67 to 73. Residues 19-73 form a 2 X 7 AA repeats of Q-H-G-H-G-G-Q region; it reads QHGHGGQDQHGYGHGQQAVYGKGHEGHGVNNLGQDGHGQHGYAHGHSDQHGHGGQ. The segment covering 22 to 32 has biased composition (gly residues); that stretch reads HGGQDQHGYGH. The tract at residues 22-85 is disordered; it reads HGGQDQHGYG…QHDGYKNRGY (64 aa). The span at 63–85 shows a compositional bias: basic and acidic residues; sequence GHSDQHGHGGQHGQHDGYKNRGY.

In terms of assembly, homodimer. Post-translationally, the N-terminus is blocked. In terms of tissue distribution, hemolymph.

In terms of biological role, this protein inhibits the growth of a variety of fungal species. The antifungal activity of this protein is enhanced by the presence of sarcotoxin IA. The polypeptide is Antifungal protein (Sarcophaga peregrina (Flesh fly)).